A 357-amino-acid chain; its full sequence is Membrane-bound lytic murein transglycosylase C (357 aa).

A signal peptide spans 1 to 15 (MKKYLLLALLPFLYA). C16 carries N-palmitoyl cysteine lipidation. C16 carries S-diacylglycerol cysteine lipidation.

Belongs to the transglycosylase Slt family.

It is found in the cell outer membrane. The enzyme catalyses Exolytic cleavage of the (1-&gt;4)-beta-glycosidic linkage between N-acetylmuramic acid (MurNAc) and N-acetylglucosamine (GlcNAc) residues in peptidoglycan, from either the reducing or the non-reducing ends of the peptidoglycan chains, with concomitant formation of a 1,6-anhydrobond in the MurNAc residue.. In terms of biological role, murein-degrading enzyme. May play a role in recycling of muropeptides during cell elongation and/or cell division. The chain is Membrane-bound lytic murein transglycosylase C from Haemophilus influenzae (strain 86-028NP).